Here is a 51-residue protein sequence, read N- to C-terminus: Large ribosomal subunit protein eL39 (51 aa).

This sequence belongs to the eukaryotic ribosomal protein eL39 family. In terms of assembly, interacts with YIH1.

The protein is Large ribosomal subunit protein eL39 (RPL39) of Kluyveromyces marxianus (Yeast).